A 493-amino-acid chain; its full sequence is Probable cytochrome P450 CYP36A1 (493 aa).

A run of 3 helical transmembrane segments spans residues 1 to 21 (MLFA…CRFA), 60 to 80 (GGIF…YDML), and 290 to 310 (QLIV…IIVL). Cysteine 440 is a binding site for heme.

This sequence belongs to the cytochrome P450 family. Heme is required as a cofactor.

It is found in the membrane. Cytochromes P450 are a group of heme-thiolate monooxygenases. They oxidize a variety of structurally unrelated compounds, including steroids, fatty acids, and xenobiotics. This is Probable cytochrome P450 CYP36A1 (cyp-36A1) from Caenorhabditis elegans.